Here is a 444-residue protein sequence, read N- to C-terminus: Argininosuccinate synthase (444 aa).

Residues 18-26 (AFSGGLDTS) and alanine 44 each bind ATP. Residue tyrosine 100 participates in L-citrulline binding. ATP contacts are provided by glycine 130 and threonine 132. Residues threonine 132, asparagine 136, and aspartate 137 each coordinate L-aspartate. Position 136 (asparagine 136) interacts with L-citrulline. Aspartate 137 contributes to the ATP binding site. Residues arginine 140 and serine 193 each contribute to the L-citrulline site. Aspartate 195 serves as a coordination point for ATP. Positions 202, 204, and 281 each coordinate L-citrulline.

The protein belongs to the argininosuccinate synthase family. Type 2 subfamily. Homotetramer.

It localises to the cytoplasm. It catalyses the reaction L-citrulline + L-aspartate + ATP = 2-(N(omega)-L-arginino)succinate + AMP + diphosphate + H(+). It participates in amino-acid biosynthesis; L-arginine biosynthesis; L-arginine from L-ornithine and carbamoyl phosphate: step 2/3. The polypeptide is Argininosuccinate synthase (Haemophilus influenzae (strain PittEE)).